Reading from the N-terminus, the 327-residue chain is Ribosomal RNA small subunit methyltransferase H (327 aa).

S-adenosyl-L-methionine is bound by residues 36 to 38, Asp-61, Phe-88, Asp-114, and Gln-121; that span reads GGH.

Belongs to the methyltransferase superfamily. RsmH family.

Its subcellular location is the cytoplasm. It catalyses the reaction cytidine(1402) in 16S rRNA + S-adenosyl-L-methionine = N(4)-methylcytidine(1402) in 16S rRNA + S-adenosyl-L-homocysteine + H(+). Its function is as follows. Specifically methylates the N4 position of cytidine in position 1402 (C1402) of 16S rRNA. This is Ribosomal RNA small subunit methyltransferase H from Chlorobium phaeovibrioides (strain DSM 265 / 1930) (Prosthecochloris vibrioformis (strain DSM 265)).